The following is a 448-amino-acid chain: Delta(14)-sterol reductase ERG24 (448 aa).

7 helical membrane passes run I18–L38, C75–G95, V108–A128, I157–I177, V251–L271, M279–V299, and N318–F338. Residues K345, R349, L368, W373, and N380–Y381 contribute to the NADP(+) site. Residues P394–I414 form a helical membrane-spanning segment. NADP(+) is bound by residues D420, C424 to Y428, and Y435.

It belongs to the ERG4/ERG24 family.

It localises to the endoplasmic reticulum membrane. It carries out the reaction 4,4-dimethyl-5alpha-cholesta-8,24-dien-3beta-ol + NADP(+) = 4,4-dimethyl-5alpha-cholesta-8,14,24-trien-3beta-ol + NADPH + H(+). It participates in steroid biosynthesis; zymosterol biosynthesis; zymosterol from lanosterol: step 2/6. Its function is as follows. C-14 sterol reductase; part of the third module of ergosterol biosynthesis pathway that includes the late steps of the pathway. ERG24 reduces the C14=C15 double bond of 4,4-dimethyl-cholesta-8,14,24-trienol to produce 4,4-dimethyl-cholesta-8,24-dienol. The third module or late pathway involves the ergosterol synthesis itself through consecutive reactions that mainly occur in the endoplasmic reticulum (ER) membrane. Firstly, the squalene synthase ERG9 catalyzes the condensation of 2 farnesyl pyrophosphate moieties to form squalene, which is the precursor of all steroids. Squalene synthase is crucial for balancing the incorporation of farnesyl diphosphate (FPP) into sterol and nonsterol isoprene synthesis. Secondly, the squalene epoxidase ERG1 catalyzes the stereospecific oxidation of squalene to (S)-2,3-epoxysqualene, which is considered to be a rate-limiting enzyme in steroid biosynthesis. Then, the lanosterol synthase ERG7 catalyzes the cyclization of (S)-2,3 oxidosqualene to lanosterol, a reaction that forms the sterol core. In the next steps, lanosterol is transformed to zymosterol through a complex process involving various demethylation, reduction and desaturation reactions. The lanosterol 14-alpha-demethylase ERG11 (also known as CYP51) catalyzes C14-demethylation of lanosterol to produce 4,4'-dimethyl cholesta-8,14,24-triene-3-beta-ol, which is critical for ergosterol biosynthesis. The C-14 reductase ERG24 reduces the C14=C15 double bond of 4,4-dimethyl-cholesta-8,14,24-trienol to produce 4,4-dimethyl-cholesta-8,24-dienol. 4,4-dimethyl-cholesta-8,24-dienol is substrate of the C-4 demethylation complex ERG25-ERG26-ERG27 in which ERG25 catalyzes the three-step monooxygenation required for the demethylation of 4,4-dimethyl and 4alpha-methylsterols, ERG26 catalyzes the oxidative decarboxylation that results in a reduction of the 3-beta-hydroxy group at the C-3 carbon to an oxo group, and ERG27 is responsible for the reduction of the keto group on the C-3. ERG28 has a role as a scaffold to help anchor ERG25, ERG26 and ERG27 to the endoplasmic reticulum and ERG29 regulates the activity of the iron-containing C4-methylsterol oxidase ERG25. Then, the sterol 24-C-methyltransferase ERG6 catalyzes the methyl transfer from S-adenosyl-methionine to the C-24 of zymosterol to form fecosterol. The C-8 sterol isomerase ERG2 catalyzes the reaction which results in unsaturation at C-7 in the B ring of sterols and thus converts fecosterol to episterol. The sterol-C5-desaturase ERG3 then catalyzes the introduction of a C-5 double bond in the B ring to produce 5-dehydroepisterol. The C-22 sterol desaturase ERG5 further converts 5-dehydroepisterol into ergosta-5,7,22,24(28)-tetraen-3beta-ol by forming the C-22(23) double bond in the sterol side chain. Finally, ergosta-5,7,22,24(28)-tetraen-3beta-ol is substrate of the C-24(28) sterol reductase ERG4 to produce ergosterol. The sequence is that of Delta(14)-sterol reductase ERG24 from Candida albicans (strain SC5314 / ATCC MYA-2876) (Yeast).